Consider the following 481-residue polypeptide: Ras-GEF domain-containing family member 1A (481 aa).

The N-terminal Ras-GEF domain occupies 41–170; it reads QDGHLISGSL…AIAQMTQSLL (130 aa). In terms of domain architecture, Ras-GEF spans 214-461; that stretch reads DPLVLAQQLT…FVASFESEGP (248 aa).

In terms of tissue distribution, detected in brain and spinal cord. Highly expressed in a number of intrahepatic cholangiocarcinoma tissue biopsies.

In terms of biological role, guanine nucleotide exchange factor (GEF) with specificity for RAP2A, KRAS, HRAS, and NRAS (in vitro). Plays a role in cell migration. In Homo sapiens (Human), this protein is Ras-GEF domain-containing family member 1A (RASGEF1A).